Consider the following 282-residue polypeptide: Bis(5'-nucleosyl)-tetraphosphatase, symmetrical (282 aa).

This sequence belongs to the Ap4A hydrolase family.

It carries out the reaction P(1),P(4)-bis(5'-adenosyl) tetraphosphate + H2O = 2 ADP + 2 H(+). In terms of biological role, hydrolyzes diadenosine 5',5'''-P1,P4-tetraphosphate to yield ADP. This is Bis(5'-nucleosyl)-tetraphosphatase, symmetrical from Escherichia coli O45:K1 (strain S88 / ExPEC).